Here is a 272-residue protein sequence, read N- to C-terminus: Petrobactin import ATP-binding protein FpuC (272 aa).

The ABC transporter domain occupies I2–E238. G34–S41 serves as a coordination point for ATP.

Belongs to the ABC transporter superfamily. The complex is composed of two ATP-binding proteins (FpuC), two transmembrane proteins (FpuB) and a solute-binding protein (FpuA).

It localises to the cell membrane. It carries out the reaction a Fe(III)-siderophore(out) + ATP + H2O = a Fe(III)-siderophore(in) + ADP + phosphate + H(+). In terms of biological role, part of an ABC transporter complex involved in ferric-petrobactin uptake. Probably responsible for energy coupling to the transport system. In Bacillus anthracis, this protein is Petrobactin import ATP-binding protein FpuC.